The primary structure comprises 545 residues: CTP synthase (545 aa).

An amidoligase domain region spans residues 1-265 (MNGIKHIFIT…DKFVIKHLDL (265 aa)). S15 is a binding site for CTP. UTP is bound at residue S15. Residues 16–21 (SIGKGL) and D73 contribute to the ATP site. Positions 73 and 141 each coordinate Mg(2+). Residues 148 to 150 (DIE), 188 to 193 (KTKPTQ), and K224 contribute to the CTP site. UTP contacts are provided by residues 188-193 (KTKPTQ) and K224. A Glutamine amidotransferase type-1 domain is found at 290 to 534 (EIAIIGKYTG…VAAALARKEI (245 aa)). Position 349 (G349) interacts with L-glutamine. The active-site Nucleophile; for glutamine hydrolysis is the C376. Residues 377-380 (LGMQ), E400, and R460 each bind L-glutamine. Catalysis depends on residues H507 and E509.

It belongs to the CTP synthase family. In terms of assembly, homotetramer.

The catalysed reaction is UTP + L-glutamine + ATP + H2O = CTP + L-glutamate + ADP + phosphate + 2 H(+). It carries out the reaction L-glutamine + H2O = L-glutamate + NH4(+). The enzyme catalyses UTP + NH4(+) + ATP = CTP + ADP + phosphate + 2 H(+). Its pathway is pyrimidine metabolism; CTP biosynthesis via de novo pathway; CTP from UDP: step 2/2. With respect to regulation, allosterically activated by GTP, when glutamine is the substrate; GTP has no effect on the reaction when ammonia is the substrate. The allosteric effector GTP functions by stabilizing the protein conformation that binds the tetrahedral intermediate(s) formed during glutamine hydrolysis. Inhibited by the product CTP, via allosteric rather than competitive inhibition. Catalyzes the ATP-dependent amination of UTP to CTP with either L-glutamine or ammonia as the source of nitrogen. Regulates intracellular CTP levels through interactions with the four ribonucleotide triphosphates. The protein is CTP synthase of Tropheryma whipplei (strain TW08/27) (Whipple's bacillus).